A 340-amino-acid chain; its full sequence is Protein SSUH2 homolog (340 aa).

The segment covering 1–11 (MDRDPSEEDSM) has biased composition (acidic residues). The segment at 1 to 20 (MDRDPSEEDSMADLSFEAES) is disordered.

As to expression, widely expressed, with highest levels in the liver, intestine, tongue and underjaw.

The protein localises to the cytoplasm. It is found in the nucleus. Plays a role in odontogenesis. This is Protein SSUH2 homolog from Mus musculus (Mouse).